The sequence spans 164 residues: Phosphopantetheine adenylyltransferase (164 aa).

Ser9 lines the substrate pocket. ATP is bound by residues 9-10 (SF) and His17. Residues Lys41, Val78, and Arg92 each coordinate substrate. ATP is bound by residues 93-95 (GLR), Glu103, and 128-134 (SRPITAT).

It belongs to the bacterial CoaD family. In terms of assembly, homohexamer. Requires Mg(2+) as cofactor.

The protein resides in the cytoplasm. The enzyme catalyses (R)-4'-phosphopantetheine + ATP + H(+) = 3'-dephospho-CoA + diphosphate. It participates in cofactor biosynthesis; coenzyme A biosynthesis; CoA from (R)-pantothenate: step 4/5. In terms of biological role, reversibly transfers an adenylyl group from ATP to 4'-phosphopantetheine, yielding dephospho-CoA (dPCoA) and pyrophosphate. In Agrobacterium fabrum (strain C58 / ATCC 33970) (Agrobacterium tumefaciens (strain C58)), this protein is Phosphopantetheine adenylyltransferase.